We begin with the raw amino-acid sequence, 360 residues long: Hydroxyproline O-arabinosyltransferase RDN2 (360 aa).

The helical; Signal-anchor transmembrane segment at 13-33 (VLGSSFATYNLVTMIIHYGSA) threads the bilayer.

It localises to the golgi apparatus membrane. It catalyses the reaction trans-4-hydroxy-L-prolyl-[protein] + UDP-beta-L-arabinofuranose = O-(beta-L-arabinofuranosyl)-trans-4-hydroxy-L-prolyl-[protein] + UDP + H(+). Its function is as follows. Glycosyltransferase involved in the O-arabinosylation of several proteins including extensins and small signaling peptides. Catalyzes the transfer of the initial L-arabinose to the hydroxyl group of Hyp residues. Probably involved in the arabinosylation of CLAVATA3/ESR-related (CLE) signaling peptides that move from root to shoot, to interact with SUNN receptor kinase signaling that regulates nodulation. Involved in long distance nodulation signaling events. Involved in the autoregulation of nodulation (AON), a long distance systemic signaling from root to shoot and back again, which allows legumes to limit the number of root nodules formed based on available nitrogen and previous rhizobial colonization. Functions in the root, upstream of the shoot receptor kinase SUNN and via CLE peptide, to control AON. The sequence is that of Hydroxyproline O-arabinosyltransferase RDN2 from Medicago truncatula (Barrel medic).